The following is a 447-amino-acid chain: Na(+)-translocating NADH-quinone reductase subunit A (447 aa).

This sequence belongs to the NqrA family. As to quaternary structure, composed of six subunits; NqrA, NqrB, NqrC, NqrD, NqrE and NqrF.

The enzyme catalyses a ubiquinone + n Na(+)(in) + NADH + H(+) = a ubiquinol + n Na(+)(out) + NAD(+). NQR complex catalyzes the reduction of ubiquinone-1 to ubiquinol by two successive reactions, coupled with the transport of Na(+) ions from the cytoplasm to the periplasm. NqrA to NqrE are probably involved in the second step, the conversion of ubisemiquinone to ubiquinol. The polypeptide is Na(+)-translocating NADH-quinone reductase subunit A (Haemophilus influenzae (strain PittGG)).